Reading from the N-terminus, the 196-residue chain is Peptide deformylase (196 aa).

Fe cation is bound by residues Cys-97 and His-139. Glu-140 is an active-site residue. Residue His-143 participates in Fe cation binding. Residues 171-187 (LDAQEPKRAPHSPHTDA) show a composition bias toward basic and acidic residues. A disordered region spans residues 171 to 196 (LDAQEPKRAPHSPHTDAQKPGAASDL).

The protein belongs to the polypeptide deformylase family. The cofactor is Fe(2+).

The catalysed reaction is N-terminal N-formyl-L-methionyl-[peptide] + H2O = N-terminal L-methionyl-[peptide] + formate. Removes the formyl group from the N-terminal Met of newly synthesized proteins. Requires at least a dipeptide for an efficient rate of reaction. N-terminal L-methionine is a prerequisite for activity but the enzyme has broad specificity at other positions. The protein is Peptide deformylase of Methylocella silvestris (strain DSM 15510 / CIP 108128 / LMG 27833 / NCIMB 13906 / BL2).